Consider the following 271-residue polypeptide: Formamidopyrimidine-DNA glycosylase (271 aa).

Catalysis depends on Pro2, which acts as the Schiff-base intermediate with DNA. Catalysis depends on Glu3, which acts as the Proton donor. Lys58 serves as the catalytic Proton donor; for beta-elimination activity. The DNA site is built by His91, Arg110, and Arg152. The FPG-type zinc finger occupies Gln237–His271. Arg261 (proton donor; for delta-elimination activity) is an active-site residue.

This sequence belongs to the FPG family. Monomer. It depends on Zn(2+) as a cofactor.

The enzyme catalyses Hydrolysis of DNA containing ring-opened 7-methylguanine residues, releasing 2,6-diamino-4-hydroxy-5-(N-methyl)formamidopyrimidine.. The catalysed reaction is 2'-deoxyribonucleotide-(2'-deoxyribose 5'-phosphate)-2'-deoxyribonucleotide-DNA = a 3'-end 2'-deoxyribonucleotide-(2,3-dehydro-2,3-deoxyribose 5'-phosphate)-DNA + a 5'-end 5'-phospho-2'-deoxyribonucleoside-DNA + H(+). Involved in base excision repair of DNA damaged by oxidation or by mutagenic agents. Acts as a DNA glycosylase that recognizes and removes damaged bases. Has a preference for oxidized purines, such as 7,8-dihydro-8-oxoguanine (8-oxoG). Has AP (apurinic/apyrimidinic) lyase activity and introduces nicks in the DNA strand. Cleaves the DNA backbone by beta-delta elimination to generate a single-strand break at the site of the removed base with both 3'- and 5'-phosphates. The sequence is that of Formamidopyrimidine-DNA glycosylase from Nitrosococcus oceani (strain ATCC 19707 / BCRC 17464 / JCM 30415 / NCIMB 11848 / C-107).